Consider the following 146-residue polypeptide: Anti-sigma F factor (146 aa).

The protein belongs to the anti-sigma-factor family.

The enzyme catalyses L-seryl-[protein] + ATP = O-phospho-L-seryl-[protein] + ADP + H(+). It carries out the reaction L-threonyl-[protein] + ATP = O-phospho-L-threonyl-[protein] + ADP + H(+). Its function is as follows. Binds to sigma F and blocks its ability to form an RNA polymerase holoenzyme (E-sigma F). Phosphorylates SpoIIAA on a serine residue. This phosphorylation may enable SpoIIAA to act as an anti-anti-sigma factor that counteracts SpoIIAB and thus releases sigma F from inhibition. This is Anti-sigma F factor from Anoxybacillus flavithermus (strain DSM 21510 / WK1).